Reading from the N-terminus, the 192-residue chain is Adenylate kinase (192 aa).

Position 10–15 (10–15 (GAGKGT)) interacts with ATP. Residues 30 to 59 (STGDMLREVIRRETEIGKKAKAMINAGTLV) form an NMP region. AMP contacts are provided by residues Thr31, Arg36, 57-59 (TLV), 85-88 (GYPR), and Gln92. Residues 126–142 (KRVQETIIAGGQVRSDD) form an LID region. Arg127 contacts ATP. Residues Arg139 and Arg150 each coordinate AMP. Residue Ile178 participates in ATP binding.

It belongs to the adenylate kinase family. Monomer.

The protein resides in the cytoplasm. The catalysed reaction is AMP + ATP = 2 ADP. Its pathway is purine metabolism; AMP biosynthesis via salvage pathway; AMP from ADP: step 1/1. In terms of biological role, catalyzes the reversible transfer of the terminal phosphate group between ATP and AMP. Plays an important role in cellular energy homeostasis and in adenine nucleotide metabolism. The polypeptide is Adenylate kinase (Bartonella henselae (strain ATCC 49882 / DSM 28221 / CCUG 30454 / Houston 1) (Rochalimaea henselae)).